The sequence spans 492 residues: Aerolysin-3 (492 aa).

The N-terminal stretch at 1–23 is a signal peptide; that stretch reads MKKLKITGLSLIISGLLMAQAQA. 2 disulfide bridges follow: cysteine 42/cysteine 98 and cysteine 182/cysteine 187. Residues 68–84 are interaction with host N-linked glycan; the sequence is WQISGLANGWVIMGPGY. Residues 256 to 288 are part of the transmembrane beta-barrel after proteolytic activation of the toxin and insertion into the host membrane; sequence YGLSEKVTTKNKFKWPLVGETELSIEIAANQSW. The tract at residues 346 to 355 is interaction with glycans from host GPI-anchor; that stretch reads RWGGNAWYTH. The propeptide occupies 446-492; it reads AAASHSSRARNLSAGQGLRLEIPLDAQELSGLGFNNVSLSVTPAANQ.

Belongs to the aerolysin family. Homodimer in solution; homoheptamer in the host membrane. After binding to GPI-anchored proteins in target membranes and proteolytic removal of the C-terminal propeptide, the protein assembles into a heptameric pre-pore complex. A further conformation change leads to insertion into the host membrane. In terms of processing, proteolytic cleavage and subsequent release of the propeptide trigger a major conformation change, leading to the formation of a heptameric pre-pore that then inserts into the host membrane.

Its subcellular location is the secreted. The protein localises to the host cell membrane. Secreted, cytolytic toxin that forms pores in host membranes after proteolytic removal of a C-terminal propeptide, leading to destruction of the membrane permeability barrier and cell death. The pores are formed by transmembrane beta-strands and are approximately 3 nm in diameter. The protein is Aerolysin-3 (ahh3) of Aeromonas hydrophila.